Here is a 208-residue protein sequence, read N- to C-terminus: uncharacterized protein (208 aa).

This is an uncharacterized protein from Synechococcus elongatus (strain ATCC 33912 / PCC 7942 / FACHB-805) (Anacystis nidulans R2).